Reading from the N-terminus, the 790-residue chain is Choline transporter-like 2 (790 aa).

A helical transmembrane segment spans residues 47 to 67 (PCLFLFVTFLCAWGYVAYYAV). N-linked (GlcNAc...) asparagine glycosylation is found at N102 and N259. The next 3 helical transmembrane spans lie at 288–308 (IITP…FQMI), 319–339 (ILVF…MLRW), and 344–364 (LVWI…YYSF). N384 carries an N-linked (GlcNAc...) asparagine glycan. 2 helical membrane-spanning segments follow: residues 400 to 420 (LWIL…VLVL) and 449 to 469 (LVPW…LLFL). The N-linked (GlcNAc...) asparagine glycan is linked to N483. Transmembrane regions (helical) follow at residues 545–565 (VIGF…VLAF), 592–612 (VYYH…CKII), 691–711 (VTGF…AAVT), and 728–748 (FVPA…FFSV).

Belongs to the CTL (choline transporter-like) family.

The protein localises to the membrane. This Anopheles gambiae (African malaria mosquito) protein is Choline transporter-like 2.